The primary structure comprises 540 residues: Tyrosinase (540 aa).

Residues 1–19 (MKSLFLSAVLLQFFETCWS) form the signal peptide. The Lumenal, melanosome segment spans residues 20–480 (QFPRPCANSE…LQQAQQIWQW (461 aa)). N-linked (GlcNAc...) asparagine glycosylation is present at Asn87. Positions 182, 205, and 214 each coordinate Cu cation. Residues Asn233, Asn293, and Asn340 are each glycosylated (N-linked (GlcNAc...) asparagine). His366 and His370 together coordinate Cu cation. A glycan (N-linked (GlcNAc...) asparagine) is linked at Asn374. His393 lines the Cu cation pocket. Residues 481 to 501 (LLGAGILGALIATIVAAVIVF) traverse the membrane as a helical segment. The Cytoplasmic portion of the chain corresponds to 502–540 (ARRKRRRNQKRKRAPSFGERQPLLQSSSEEGSSSYQTTL). A disordered region spans residues 511–540 (KRKRAPSFGERQPLLQSSSEEGSSSYQTTL). Over residues 527–540 (SSSEEGSSSYQTTL) the composition is skewed to low complexity.

Belongs to the tyrosinase family. The cofactor is Cu(2+).

The protein localises to the melanosome membrane. The enzyme catalyses 2 L-dopa + O2 = 2 L-dopaquinone + 2 H2O. The catalysed reaction is L-tyrosine + O2 = L-dopaquinone + H2O. This is a copper-containing oxidase that functions in the formation of pigments such as melanins and other polyphenolic compounds. In Oryzias latipes (Japanese rice fish), this protein is Tyrosinase (tyr).